The chain runs to 317 residues: DNA-3-methyladenine glycosylase (317 aa).

A disordered region spans residues S1–L76. Low complexity predominate over residues K53 to Q64. A phosphoserine mark is found at S84 and S258.

The protein belongs to the DNA glycosylase MPG family. As to quaternary structure, binds MBD1. Binds SSBP1.

It localises to the cytoplasm. The protein localises to the mitochondrion matrix. The protein resides in the mitochondrion nucleoid. It is found in the nucleus. It catalyses the reaction Hydrolysis of alkylated DNA, releasing 3-methyladenine, 3-methylguanine, 7-methylguanine and 7-methyladenine.. Its activity is regulated as follows. Binding to SSBP1 in mitochondria inhibits glycosylase activity in the context of a single-stranded DNA (ssDNA), but not a double-stranded DNA (dsDNA) substrates. Functionally, hydrolysis of the deoxyribose N-glycosidic bond to excise 3-methyladenine, and 7-methylguanine from the damaged DNA polymer formed by alkylation lesions. This is DNA-3-methyladenine glycosylase (Mpg) from Rattus norvegicus (Rat).